The following is an 82-amino-acid chain: Photosystem I iron-sulfur center (82 aa).

4Fe-4S ferredoxin-type domains lie at 2–31 (SHTV…MVPW) and 37–68 (GQIA…VRVY). 8 residues coordinate [4Fe-4S] cluster: C11, C14, C17, C21, C48, C51, C54, and C58.

In terms of assembly, the eukaryotic PSI reaction center is composed of at least 11 subunits. [4Fe-4S] cluster is required as a cofactor.

Its subcellular location is the plastid. The protein localises to the chloroplast thylakoid membrane. It carries out the reaction reduced [plastocyanin] + hnu + oxidized [2Fe-2S]-[ferredoxin] = oxidized [plastocyanin] + reduced [2Fe-2S]-[ferredoxin]. Apoprotein for the two 4Fe-4S centers FA and FB of photosystem I (PSI); essential for photochemical activity. FB is the terminal electron acceptor of PSI, donating electrons to ferredoxin. The C-terminus interacts with PsaA/B/D and helps assemble the protein into the PSI complex. Required for binding of PsaD and PsaE to PSI. PSI is a plastocyanin/cytochrome c6-ferredoxin oxidoreductase, converting photonic excitation into a charge separation, which transfers an electron from the donor P700 chlorophyll pair to the spectroscopically characterized acceptors A0, A1, FX, FA and FB in turn. The chain is Photosystem I iron-sulfur center from Trieres chinensis (Marine centric diatom).